Here is a 786-residue protein sequence, read N- to C-terminus: DNA repair and recombination protein RAD54-like (786 aa).

Residues R2–Q9 form a required for chromatin remodeling, strand pairing activities and coupling of ATPase activity region. At T22 the chain carries Phosphothreonine. The Helicase ATP-binding domain maps to E165–E340. D178–T185 provides a ligand contact to ATP. The short motif at D291 to H294 is the DEGH box element. The Helicase C-terminal domain occupies L497–T654. The interval K740 to F786 is disordered. Positions E752–L766 are enriched in polar residues.

It belongs to the SNF2/RAD54 helicase family. In terms of assembly, interacts (via N-terminus) with spn-A/Rad51.

It localises to the nucleus. Involved in mitotic DNA repair and meiotic recombination. Functions in the recombinational DNA repair pathway. Essential for interhomolog gene conversion (GC), but may have a less important role in intersister GC than spn-A/Rad51. In the presence of DNA, spn-A/Rad51 enhances the ATPase activity of okr/Rad54. The chain is DNA repair and recombination protein RAD54-like from Drosophila virilis (Fruit fly).